The sequence spans 76 residues: Acyl carrier protein (76 aa).

Residues 1 to 76 form the Carrier domain; sequence MSVEEKISKI…DAIAYIKNKQ (76 aa). Ser36 carries the O-(pantetheine 4'-phosphoryl)serine modification.

The protein belongs to the acyl carrier protein (ACP) family. 4'-phosphopantetheine is transferred from CoA to a specific serine of apo-ACP by AcpS. This modification is essential for activity because fatty acids are bound in thioester linkage to the sulfhydryl of the prosthetic group.

The protein resides in the cytoplasm. The protein operates within lipid metabolism; fatty acid biosynthesis. Carrier of the growing fatty acid chain in fatty acid biosynthesis. In Nitratidesulfovibrio vulgaris (strain DSM 19637 / Miyazaki F) (Desulfovibrio vulgaris), this protein is Acyl carrier protein.